The primary structure comprises 351 residues: GTP 3',8-cyclase (351 aa).

Residues 29-254 (RFGRVARDLR…EHGREDPSAP (226 aa)) form the Radical SAM core domain. R38 contacts GTP. The [4Fe-4S] cluster site is built by C45 and C49. S-adenosyl-L-methionine is bound at residue Y51. C52 serves as a coordination point for [4Fe-4S] cluster. R89 provides a ligand contact to GTP. An S-adenosyl-L-methionine-binding site is contributed by G93. T120 serves as a coordination point for GTP. S-adenosyl-L-methionine is bound at residue S144. K181 contributes to the GTP binding site. M214 is an S-adenosyl-L-methionine binding site. 2 residues coordinate [4Fe-4S] cluster: C278 and C281. GTP is bound at residue 283 to 285 (RTR). Position 295 (C295) interacts with [4Fe-4S] cluster.

It belongs to the radical SAM superfamily. MoaA family. In terms of assembly, monomer and homodimer. The cofactor is [4Fe-4S] cluster.

It carries out the reaction GTP + AH2 + S-adenosyl-L-methionine = (8S)-3',8-cyclo-7,8-dihydroguanosine 5'-triphosphate + 5'-deoxyadenosine + L-methionine + A + H(+). The protein operates within cofactor biosynthesis; molybdopterin biosynthesis. Catalyzes the cyclization of GTP to (8S)-3',8-cyclo-7,8-dihydroguanosine 5'-triphosphate. In Rhodococcus opacus (strain B4), this protein is GTP 3',8-cyclase.